The chain runs to 505 residues: Putative thymidine phosphorylase (505 aa).

This sequence belongs to the thymidine/pyrimidine-nucleoside phosphorylase family. Type 2 subfamily.

The enzyme catalyses thymidine + phosphate = 2-deoxy-alpha-D-ribose 1-phosphate + thymine. This is Putative thymidine phosphorylase from Parvibaculum lavamentivorans (strain DS-1 / DSM 13023 / NCIMB 13966).